The sequence spans 208 residues: Sec-independent protein translocase protein TatB (208 aa).

The chain crosses the membrane as a helical span at residues 1–21; sequence MFDIGVGELTLIAVVALVVLG. The interval 188–208 is disordered; that stretch reads DAGTPAASMPSAPAKIQEKQP.

It belongs to the TatB family. In terms of assembly, the Tat system comprises two distinct complexes: a TatABC complex, containing multiple copies of TatA, TatB and TatC subunits, and a separate TatA complex, containing only TatA subunits. Substrates initially bind to the TatABC complex, which probably triggers association of the separate TatA complex to form the active translocon.

Its subcellular location is the cell inner membrane. Its function is as follows. Part of the twin-arginine translocation (Tat) system that transports large folded proteins containing a characteristic twin-arginine motif in their signal peptide across membranes. Together with TatC, TatB is part of a receptor directly interacting with Tat signal peptides. TatB may form an oligomeric binding site that transiently accommodates folded Tat precursor proteins before their translocation. In Xanthomonas axonopodis pv. citri (strain 306), this protein is Sec-independent protein translocase protein TatB.